We begin with the raw amino-acid sequence, 901 residues long: Protein translocase subunit SecA (901 aa).

ATP-binding positions include Gln-87, Gly-105–Thr-109, and Asp-512. Positions 885, 887, 896, and 897 each coordinate Zn(2+).

This sequence belongs to the SecA family. In terms of assembly, monomer and homodimer. Part of the essential Sec protein translocation apparatus which comprises SecA, SecYEG and auxiliary proteins SecDF-YajC and YidC. It depends on Zn(2+) as a cofactor.

Its subcellular location is the cell inner membrane. The protein resides in the cytoplasm. The enzyme catalyses ATP + H2O + cellular proteinSide 1 = ADP + phosphate + cellular proteinSide 2.. In terms of biological role, part of the Sec protein translocase complex. Interacts with the SecYEG preprotein conducting channel. Has a central role in coupling the hydrolysis of ATP to the transfer of proteins into and across the cell membrane, serving both as a receptor for the preprotein-SecB complex and as an ATP-driven molecular motor driving the stepwise translocation of polypeptide chains across the membrane. The polypeptide is Protein translocase subunit SecA (Salmonella typhi).